Consider the following 181-residue polypeptide: Ribose 1,5-bisphosphate phosphokinase PhnN (181 aa).

Residue 12 to 19 coordinates ATP; sequence GPSGAGKD.

Belongs to the ribose 1,5-bisphosphokinase family.

It catalyses the reaction alpha-D-ribose 1,5-bisphosphate + ATP = 5-phospho-alpha-D-ribose 1-diphosphate + ADP. The protein operates within metabolic intermediate biosynthesis; 5-phospho-alpha-D-ribose 1-diphosphate biosynthesis; 5-phospho-alpha-D-ribose 1-diphosphate from D-ribose 5-phosphate (route II): step 3/3. Functionally, catalyzes the phosphorylation of ribose 1,5-bisphosphate to 5-phospho-D-ribosyl alpha-1-diphosphate (PRPP). This chain is Ribose 1,5-bisphosphate phosphokinase PhnN, found in Acidiphilium cryptum (strain JF-5).